We begin with the raw amino-acid sequence, 76 residues long: MAKCTLTSLILLLIVLVLIQESHIVEGRPLKSSRISNVSKKFAAGNSNLSSKLTTEDHSLDAFRPTNPGNSPGIGH.

Positions 1–27 (MAKCTLTSLILLLIVLVLIQESHIVEG) are cleaved as a signal peptide. Residues 28–61 (RPLKSSRISNVSKKFAAGNSNLSSKLTTEDHSLD) constitute a propeptide that is removed on maturation. Residues asparagine 37 and asparagine 48 are each glycosylated (N-linked (GlcNAc...) asparagine). Positions 49 to 76 (LSSKLTTEDHSLDAFRPTNPGNSPGIGH) are disordered. Hydroxyproline is present on residues proline 65, proline 68, and proline 72.

Belongs to the C-terminally encoded plant signaling peptide (CEP) family. As to quaternary structure, interacts with CEP receptors (e.g. CEPR1 and CEPR2). In terms of processing, the mature small signaling peptide is generated by proteolytic processing of the longer precursor.

It is found in the secreted. It localises to the extracellular space. The protein resides in the apoplast. Its function is as follows. Extracellular signaling peptide that may regulate primary root growth rate and systemic nitrogen (N)-demand signaling. Mediates up-regulation of genes involved in N uptake and assimilation pathways. This Arabidopsis thaliana (Mouse-ear cress) protein is Precursor of CEP7.